We begin with the raw amino-acid sequence, 60 residues long: Large ribosomal subunit protein bL32 (60 aa).

The segment covering 1–23 (MAKHPVPKKKTSKSKRDMRRSHH) has biased composition (basic residues). A disordered region spans residues 1 to 34 (MAKHPVPKKKTSKSKRDMRRSHHALTAPNLTECP). The Zn(2+) site is built by cysteine 33, cysteine 36, cysteine 46, and cysteine 49. A C4-type zinc finger spans residues 33–49 (CPQCHGKKLSHHICPNC).

This sequence belongs to the bacterial ribosomal protein bL32 family. As to quaternary structure, part of the 50S ribosomal subunit. Contacts proteins L17 and L22. Zn(2+) serves as cofactor.

Forms a cluster with L17 and L22, and with L22, a pair of 'tweezers' that hold together all the domains of the 23S rRNA. Interacts with the antibiotic troleandomycin which blocks the peptide exit tunnel. The sequence is that of Large ribosomal subunit protein bL32 (rpmF) from Deinococcus radiodurans (strain ATCC 13939 / DSM 20539 / JCM 16871 / CCUG 27074 / LMG 4051 / NBRC 15346 / NCIMB 9279 / VKM B-1422 / R1).